The following is a 523-amino-acid chain: Solute carrier family 2, facilitated glucose transporter member 2 (523 aa).

At 1–10 (MSEDKITGTL) the chain is on the cytoplasmic side. Residues 11-31 (AFTVFTAVLSSFQFGYDIGVI) traverse the membrane as a helical segment. At 32–97 (NAPQEVIISH…SAHIVTMLWS (66 aa)) the chain is on the extracellular side. Residue asparagine 62 is glycosylated (N-linked (GlcNAc...) asparagine). Residues 98-118 (LSVSSFAVGGMVASFFGGWLG) traverse the membrane as a helical segment. At 119–126 (DKLGRIKA) the chain is on the cytoplasmic side. The chain crosses the membrane as a helical span at residues 127–147 (MLAANSLSLTGALLMGCSKFG). Over 148-157 (PAHALIIAGR) the chain is Extracellular. A helical membrane pass occupies residues 158–178 (SVSGLYCGLISGLVPMYIGEI). At 179 to 186 (APTTLRGA) the chain is on the cytoplasmic side. Residues 187–207 (LGTLHQLALVTGILISQIAGL) form a helical membrane-spanning segment. Residue glutamine 192 coordinates D-glucose. Residues 208–216 (SFILGNQDH) are Extracellular-facing. Residues 217 to 237 (WHILLGLSAVPALLQCLLLLF) form a helical membrane-spanning segment. Topologically, residues 238 to 302 (CPESPRYLYI…LFTDANYRQP (65 aa)) are cytoplasmic. A helical transmembrane segment spans residues 303 to 323 (ILVALMLHMAQQFSGINGIFY). D-glucose is bound by residues 313–314 (QQ) and asparagine 319. Over 324-337 (YSTSIFQTAGISQP) the chain is Extracellular. Residues 338-358 (VYATIGVGAINMIFTAVSVLL) traverse the membrane as a helical segment. A D-glucose-binding site is contributed by asparagine 348. The Cytoplasmic portion of the chain corresponds to 359 to 367 (VEKAGRRTL). Residues 368–388 (FLTGMIGMFFCTIFMSVGLVL) traverse the membrane as a helical segment. Residues 389-401 (LDKFAWMSYVSMT) are Extracellular-facing. The helical transmembrane segment at 402-422 (AIFLFVSFFEIGPGPIPWFMV) threads the bilayer. Residues glutamate 411 and tryptophan 419 each contribute to the D-glucose site. At 423–432 (AEFFSQGPRP) the chain is on the cytoplasmic side. The chain crosses the membrane as a helical span at residues 433 to 453 (TALALAAFSNWVCNFVIALCF). The Extracellular portion of the chain corresponds to 454–460 (QYIADFL). The helical transmembrane segment at 461–481 (GPYVFFLFAGVVLVFTLFTFF) threads the bilayer. Residues 482–523 (KVPETKGKSFEEIAAEFRKKSGSAPPRKAAVQMEFLASSESV) lie on the Cytoplasmic side of the membrane. The residue at position 522 (serine 522) is a Phosphoserine.

Belongs to the major facilitator superfamily. Sugar transporter (TC 2.A.1.1) family. Glucose transporter subfamily. In terms of processing, N-glycosylated; required for stability and retention at the cell surface of pancreatic beta cells. As to expression, in embryo, expressed in endoderm layer of yolk sac and liver primordium.

It localises to the cell membrane. The enzyme catalyses D-glucose(out) = D-glucose(in). The catalysed reaction is D-fructose(out) = D-fructose(in). It catalyses the reaction L-dehydroascorbate(out) = L-dehydroascorbate(in). It carries out the reaction D-galactose(in) = D-galactose(out). With respect to regulation, D-glucose and maltose competitively inhibit fructose transport. D-glucose, D-fructose and maltose inhibit deoxyglucose transport. In terms of biological role, facilitative hexose transporter that mediates the transport of glucose, fructose and galactose. Likely mediates the bidirectional transfer of glucose across the plasma membrane of hepatocytes and is responsible for uptake of glucose by the beta cells; may comprise part of the glucose-sensing mechanism of the beta cell. May also participate with the Na(+)/glucose cotransporter in the transcellular transport of glucose in the small intestine and kidney. Also able to mediate the transport of dehydroascorbate. This is Solute carrier family 2, facilitated glucose transporter member 2 from Mus musculus (Mouse).